A 490-amino-acid chain; its full sequence is MNLAEICDNAKKGREYALLGNYDSSMVYYQGVIQQIQRHCQSVRDPAIKGKWQQVRQELLEEYEQVKSIVSTLESFKIDRPPDFPVSCQDEPFRDPAVWPPPVPAEHRAPPQIRRPNREVRPLRKEMAGVGARGPVGRAHPISKSEKPSTSRDKDCRARGRDDKGRKNMQDGASDGEMPKFDGAGYDKDLVEALERDIVSRNPSIHWDDIADLEEAKKLLREAVVLPMWMPDFFKGIRRPWKGVLMVGPPGTGKTMLAKAVATECGTTFFNVSSSTLTSKYRGESEKLVRLLFEMARFYAPTTIFIDEIDSICSRRGTSDEHEASRRVKSELLIQMDGVGGALENDDPSKMVMVLAATNFPWDIDEALRRRLEKRIYIPLPTAKGRAELLKINLREVELDPDIQLEDIAEKIEGYSGADITNVCRDASLMAMRRRINGLGPEEIRALSKEELQMPVTKGDFELALKKIAKSVSAADLEKYEKWMVEFGSA.

M1 is modified (N-acetylmethionine). The tract at residues 95 to 184 (DPAVWPPPVP…DGEMPKFDGA (90 aa)) is disordered. The span at 116 to 127 (PNREVRPLRKEM) shows a compositional bias: basic and acidic residues. The segment covering 128 to 139 (AGVGARGPVGRA) has biased composition (low complexity). The segment covering 143–169 (SKSEKPSTSRDKDCRARGRDDKGRKNM) has biased composition (basic and acidic residues). A Phosphoserine modification is found at S174. 248 to 255 (GPPGTGKT) provides a ligand contact to ATP.

Belongs to the AAA ATPase family. Katanin p60 subunit A1 subfamily. A-like 1 sub-subfamily. Interacts with KATNB1 and KATNBL1.

The protein resides in the cytoplasm. Its subcellular location is the cytoskeleton. It localises to the spindle pole. It is found in the spindle. It catalyses the reaction n ATP + n H2O + a microtubule = n ADP + n phosphate + (n+1) alpha/beta tubulin heterodimers.. Regulates microtubule dynamics in Sertoli cells, a process that is essential for spermiogenesis and male fertility. Severs microtubules in an ATP-dependent manner, promoting rapid reorganization of cellular microtubule arrays. Has microtubule-severing activity in vitro. This is Katanin p60 ATPase-containing subunit A-like 1 from Papio anubis (Olive baboon).